A 257-amino-acid chain; its full sequence is Triosephosphate isomerase (257 aa).

Positions 11 and 13 each coordinate substrate. The Electrophile role is filled by His96. Glu170 acts as the Proton acceptor in catalysis.

Belongs to the triosephosphate isomerase family. In terms of assembly, homodimer.

It carries out the reaction D-glyceraldehyde 3-phosphate = dihydroxyacetone phosphate. Its pathway is carbohydrate biosynthesis; gluconeogenesis. It participates in carbohydrate degradation; glycolysis; D-glyceraldehyde 3-phosphate from glycerone phosphate: step 1/1. The sequence is that of Triosephosphate isomerase from Giardia intestinalis (Giardia lamblia).